Here is a 495-residue protein sequence, read N- to C-terminus: REST corepressor 3 (495 aa).

The ELM2 domain maps to 1 to 83 (MRVGAEYQAR…KSLADLPNFT (83 aa)). Lys20 participates in a covalent cross-link: Glycyl lysine isopeptide (Lys-Gly) (interchain with G-Cter in SUMO2). The SANT 1 domain maps to 84 to 135 (PFPDEWTVEDKVLFEQAFSFHGKSFHRIQQMLPDKTIASLVKYYYSWKKTRS). Residues 147–219 (LANRHNQGDS…SQRSKCRPPK (73 aa)) are disordered. Phosphoserine is present on residues Ser156 and Ser171. Over residues 162 to 184 (ETHPMDGNDSDYDPKKEAKKEGN) the composition is skewed to basic and acidic residues. Residue Lys193 forms a Glycyl lysine isopeptide (Lys-Gly) (interchain with G-Cter in SUMO2) linkage. A compositionally biased stretch (basic residues) spans 205–217 (QHRHHSQRSKCRP). A coiled-coil region spans residues 237-273 (AANTILRQLDMELISLKRQVQNAKQVNSALKQKMEGG). A Glycyl lysine isopeptide (Lys-Gly) (interchain with G-Cter in SUMO2) cross-link involves residue Lys285. The region spanning 285-336 (KINARWTTEEQLLAVQGVRKYGKDFQAIADVIGNKTVGQVKNFFVNYRRRFN) is the SANT 2 domain. Positions 346–495 (AEQGTQASNG…IQTDSQSSLH (150 aa)) are disordered. Over residues 348–357 (QGTQASNGDA) the composition is skewed to polar residues. Thr376 bears the Phosphothreonine mark. The span at 393 to 405 (PSPPAPSSTPTPT) shows a compositional bias: pro residues. The segment covering 419-428 (RPTLPAAPAL) has biased composition (low complexity). Arg445 and Arg457 each carry asymmetric dimethylarginine. The segment covering 475-495 (VGGQQPPSLIGIQTDSQSSLH) has biased composition (polar residues).

It belongs to the CoREST family.

The protein resides in the nucleus. Functionally, may act as a component of a corepressor complex that represses transcription. The sequence is that of REST corepressor 3 (RCOR3) from Homo sapiens (Human).